The chain runs to 33 residues: Beta-amanitin proprotein (33 aa).

Positions 1–10 (MSDINATRLP) are excised as a propeptide. The cyclopeptide (Ile-Pro) cross-link spans 11–18 (IWGIGCDP). Positions 12–16 (WGIGC) form a cross-link, 2'-cysteinyl-6'-hydroxytryptophan sulfoxide (Trp-Cys). The propeptide occupies 19-33 (CVGDDVAALTTRGEA).

Belongs to the MSDIN fungal toxin family. In terms of processing, processed by the macrocyclase-peptidase enzyme POPB to yield a toxic cyclic decapeptide. POPB first removes 10 residues from the N-terminus. Conformational trapping of the remaining peptide forces the enzyme to release this intermediate rather than proceed to macrocyclization. The enzyme rebinds the remaining peptide in a different conformation and catalyzes macrocyclization of the N-terminal 8 residues.

Its function is as follows. Toxin belonging to the bicyclic octapeptides amatoxins that acts by binding non-competitively to RNA polymerase II and greatly slowing the elongation of transcripts from target promoters. In Amanita rimosa, this protein is Beta-amanitin proprotein.